We begin with the raw amino-acid sequence, 344 residues long: S-methyl-5'-thioadenosine phosphorylase (344 aa).

Phosphate is bound by residues Thr45, 88-89 (RH), and 121-122 (SA). Met238 contributes to the substrate binding site. Ser239 contributes to the phosphate binding site. Substrate is bound at residue 262-264 (DYD).

This sequence belongs to the PNP/MTAP phosphorylase family. MTAP subfamily. As to quaternary structure, homotrimer.

It is found in the cytoplasm. It localises to the nucleus. The enzyme catalyses S-methyl-5'-thioadenosine + phosphate = 5-(methylsulfanyl)-alpha-D-ribose 1-phosphate + adenine. It functions in the pathway amino-acid biosynthesis; L-methionine biosynthesis via salvage pathway; S-methyl-5-thio-alpha-D-ribose 1-phosphate from S-methyl-5'-thioadenosine (phosphorylase route): step 1/1. Its function is as follows. Catalyzes the reversible phosphorylation of S-methyl-5'-thioadenosine (MTA) to adenine and 5-methylthioribose-1-phosphate. Involved in the breakdown of MTA, a major by-product of polyamine biosynthesis. Responsible for the first step in the methionine salvage pathway after MTA has been generated from S-adenosylmethionine. Has broad substrate specificity with 6-aminopurine nucleosides as preferred substrates. In Candida albicans (strain SC5314 / ATCC MYA-2876) (Yeast), this protein is S-methyl-5'-thioadenosine phosphorylase.